Here is a 513-residue protein sequence, read N- to C-terminus: ATP synthase subunit alpha (513 aa).

169–176 contributes to the ATP binding site; the sequence is GDRQTGKT.

The protein belongs to the ATPase alpha/beta chains family. In terms of assembly, F-type ATPases have 2 components, CF(1) - the catalytic core - and CF(0) - the membrane proton channel. CF(1) has five subunits: alpha(3), beta(3), gamma(1), delta(1), epsilon(1). CF(0) has three main subunits: a(1), b(2) and c(9-12). The alpha and beta chains form an alternating ring which encloses part of the gamma chain. CF(1) is attached to CF(0) by a central stalk formed by the gamma and epsilon chains, while a peripheral stalk is formed by the delta and b chains.

It localises to the cell inner membrane. It carries out the reaction ATP + H2O + 4 H(+)(in) = ADP + phosphate + 5 H(+)(out). Produces ATP from ADP in the presence of a proton gradient across the membrane. The alpha chain is a regulatory subunit. The sequence is that of ATP synthase subunit alpha from Cupriavidus pinatubonensis (strain JMP 134 / LMG 1197) (Cupriavidus necator (strain JMP 134)).